Consider the following 321-residue polypeptide: uncharacterized protein (321 aa).

Positions Met-1–Val-12 are enriched in basic and acidic residues. The tract at residues Met-1–Glu-85 is disordered. Positions Asn-53–Arg-67 are enriched in polar residues.

This is an uncharacterized protein from Rattus norvegicus (Rat).